The sequence spans 220 residues: Adenylate kinase (220 aa).

An ATP-binding site is contributed by 12–17; the sequence is GAGKGT. The tract at residues 32-62 is NMP; it reads STGDIFRDIVKKENDELGKKIKEIMERGELV. AMP is bound by residues Thr33, Arg38, 60-62, 88-91, and Gln95; these read ELV and GYPR. The interval 129–166 is LID; sequence ARRICPKCGRIYNLISLPPKEDELCDDCKVKLVQREDD. Arg130 is a binding site for ATP. Zn(2+) is bound by residues Cys133 and Cys136. 139–140 serves as a coordination point for ATP; it reads IY. Positions 153 and 156 each coordinate Zn(2+). AMP is bound by residues Arg163 and Arg174. Residue Ile202 coordinates ATP.

This sequence belongs to the adenylate kinase family. As to quaternary structure, monomer.

It localises to the cytoplasm. The catalysed reaction is AMP + ATP = 2 ADP. It functions in the pathway purine metabolism; AMP biosynthesis via salvage pathway; AMP from ADP: step 1/1. Its function is as follows. Catalyzes the reversible transfer of the terminal phosphate group between ATP and AMP. Plays an important role in cellular energy homeostasis and in adenine nucleotide metabolism. The protein is Adenylate kinase of Thermotoga maritima (strain ATCC 43589 / DSM 3109 / JCM 10099 / NBRC 100826 / MSB8).